Reading from the N-terminus, the 129-residue chain is MLGLKQVHHIAIIATDYAVSKAFYCDILGFTLQSEVYREARDSWKGDLALNGQYVIELFSFPFPPERPSRPEACGLRHLAFSVDDIDAAVAHLESHNVKCETIRVDPYTQKRFTFFNDPDGLPLELYEQ.

One can recognise a VOC domain in the interval 6 to 129 (QVHHIAIIAT…DGLPLELYEQ (124 aa)). 4 residues coordinate a divalent metal cation: H9, E57, H78, and E125.

It to B.subtilis YwkD.

This is an uncharacterized protein from Escherichia coli (strain K12).